The following is a 180-amino-acid chain: Ribulose bisphosphate carboxylase small subunit, chloroplastic 3 (180 aa).

The N-terminal 56 residues, 1–56 (MASSVMSSAAVATRGNGAQASMVAPFTGLKSTASFPVSRKQNLDITSIASNGGRVS), are a transit peptide targeting the chloroplast.

Belongs to the RuBisCO small chain family. In terms of assembly, heterohexadecamer of 8 large and 8 small subunits. As to quaternary structure, (Microbial infection) Binds to tobamovirus movement protein; this interaction seems required for viral systemic movement.

It is found in the plastid. It localises to the chloroplast. Its subcellular location is the cell junction. The protein localises to the plasmodesma. In terms of biological role, ruBisCO catalyzes two reactions: the carboxylation of D-ribulose 1,5-bisphosphate, the primary event in carbon dioxide fixation, as well as the oxidative fragmentation of the pentose substrate. Both reactions occur simultaneously and in competition at the same active site. Although the small subunit is not catalytic it is essential for maximal activity. Involved in antiviral defenses. The sequence is that of Ribulose bisphosphate carboxylase small subunit, chloroplastic 3 from Solanum lycopersicum (Tomato).